We begin with the raw amino-acid sequence, 290 residues long: Ribosomal RNA small subunit methyltransferase A (290 aa).

Residues asparagine 27, leucine 29, glycine 54, glutamate 75, aspartate 100, and asparagine 125 each coordinate S-adenosyl-L-methionine.

It belongs to the class I-like SAM-binding methyltransferase superfamily. rRNA adenine N(6)-methyltransferase family. RsmA subfamily.

It is found in the cytoplasm. The catalysed reaction is adenosine(1518)/adenosine(1519) in 16S rRNA + 4 S-adenosyl-L-methionine = N(6)-dimethyladenosine(1518)/N(6)-dimethyladenosine(1519) in 16S rRNA + 4 S-adenosyl-L-homocysteine + 4 H(+). Functionally, specifically dimethylates two adjacent adenosines (A1518 and A1519) in the loop of a conserved hairpin near the 3'-end of 16S rRNA in the 30S particle. May play a critical role in biogenesis of 30S subunits. This is Ribosomal RNA small subunit methyltransferase A from Streptococcus agalactiae serotype Ia (strain ATCC 27591 / A909 / CDC SS700).